A 432-amino-acid chain; its full sequence is Histidinol dehydrogenase (432 aa).

Residues Ser-240, Gln-262, and His-265 each coordinate substrate. 2 residues coordinate Zn(2+): Gln-262 and His-265. Active-site proton acceptor residues include Glu-330 and His-331. Residues His-331, Asp-364, Glu-418, and His-423 each contribute to the substrate site. Asp-364 lines the Zn(2+) pocket. His-423 is a Zn(2+) binding site.

It belongs to the histidinol dehydrogenase family. Zn(2+) is required as a cofactor.

The catalysed reaction is L-histidinol + 2 NAD(+) + H2O = L-histidine + 2 NADH + 3 H(+). The protein operates within amino-acid biosynthesis; L-histidine biosynthesis; L-histidine from 5-phospho-alpha-D-ribose 1-diphosphate: step 9/9. Catalyzes the sequential NAD-dependent oxidations of L-histidinol to L-histidinaldehyde and then to L-histidine. The protein is Histidinol dehydrogenase of Wolinella succinogenes (strain ATCC 29543 / DSM 1740 / CCUG 13145 / JCM 31913 / LMG 7466 / NCTC 11488 / FDC 602W) (Vibrio succinogenes).